We begin with the raw amino-acid sequence, 319 residues long: Beta-ketoacyl-[acyl-carrier-protein] synthase III (319 aa).

Catalysis depends on residues Cys115 and His246. The ACP-binding stretch occupies residues Gln247 to Arg251. Asn276 is a catalytic residue.

Belongs to the thiolase-like superfamily. FabH family. As to quaternary structure, homodimer.

The protein localises to the cytoplasm. It carries out the reaction malonyl-[ACP] + acetyl-CoA + H(+) = 3-oxobutanoyl-[ACP] + CO2 + CoA. Its pathway is lipid metabolism; fatty acid biosynthesis. In terms of biological role, catalyzes the condensation reaction of fatty acid synthesis by the addition to an acyl acceptor of two carbons from malonyl-ACP. Catalyzes the first condensation reaction which initiates fatty acid synthesis and may therefore play a role in governing the total rate of fatty acid production. Possesses both acetoacetyl-ACP synthase and acetyl transacylase activities. Its substrate specificity determines the biosynthesis of branched-chain and/or straight-chain of fatty acids. The chain is Beta-ketoacyl-[acyl-carrier-protein] synthase III from Coxiella burnetii (strain RSA 493 / Nine Mile phase I).